The primary structure comprises 254 residues: NH(3)-dependent NAD(+) synthetase (254 aa).

32–39 serves as a coordination point for ATP; that stretch reads GISGGIDS. D38 is a Mg(2+) binding site. Deamido-NAD(+) is bound at residue R113. T133 is a binding site for ATP. E138 contacts Mg(2+). The deamido-NAD(+) site is built by K146 and D153. ATP is bound by residues K162 and T184. 244–245 serves as a coordination point for deamido-NAD(+); it reads HK.

It belongs to the NAD synthetase family. In terms of assembly, homodimer.

The catalysed reaction is deamido-NAD(+) + NH4(+) + ATP = AMP + diphosphate + NAD(+) + H(+). Its pathway is cofactor biosynthesis; NAD(+) biosynthesis; NAD(+) from deamido-NAD(+) (ammonia route): step 1/1. Functionally, catalyzes the ATP-dependent amidation of deamido-NAD to form NAD. Uses ammonia as a nitrogen source. The protein is NH(3)-dependent NAD(+) synthetase of Thermococcus kodakarensis (strain ATCC BAA-918 / JCM 12380 / KOD1) (Pyrococcus kodakaraensis (strain KOD1)).